The sequence spans 202 residues: Holliday junction resolvase RecU (202 aa).

Thr85, Asp87, Glu100, and Gln119 together coordinate Mg(2+).

Belongs to the RecU family. It depends on Mg(2+) as a cofactor.

Its subcellular location is the cytoplasm. The enzyme catalyses Endonucleolytic cleavage at a junction such as a reciprocal single-stranded crossover between two homologous DNA duplexes (Holliday junction).. In terms of biological role, endonuclease that resolves Holliday junction intermediates in genetic recombination. Cleaves mobile four-strand junctions by introducing symmetrical nicks in paired strands. Promotes annealing of linear ssDNA with homologous dsDNA. Required for DNA repair, homologous recombination and chromosome segregation. In Streptococcus equi subsp. zooepidemicus (strain MGCS10565), this protein is Holliday junction resolvase RecU.